The primary structure comprises 101 residues: Urease subunit beta (101 aa).

This sequence belongs to the urease beta subunit family. In terms of assembly, heterotrimer of UreA (gamma), UreB (beta) and UreC (alpha) subunits. Three heterotrimers associate to form the active enzyme.

Its subcellular location is the cytoplasm. It catalyses the reaction urea + 2 H2O + H(+) = hydrogencarbonate + 2 NH4(+). It functions in the pathway nitrogen metabolism; urea degradation; CO(2) and NH(3) from urea (urease route): step 1/1. In Cupriavidus pinatubonensis (strain JMP 134 / LMG 1197) (Cupriavidus necator (strain JMP 134)), this protein is Urease subunit beta.